Reading from the N-terminus, the 279-residue chain is Zinc-finger homeodomain protein 1 (279 aa).

Residues 1–30 (MEFEDNNNNNDEEQEEDMNLHEEEEDDDAV) are compositionally biased toward acidic residues. Residues 1-62 (MEFEDNNNNN…TTSTGGGGGF (62 aa)) are disordered. Residues 75–124 (FRECLKNQAVNIGGHAVDGCGEFMPAGIEGTIDALKCAACGCHRNFHRKE) form a ZF-HD dimerization-type zinc finger. Disordered stretches follow at residues 128–199 (FHHA…TKFT) and 245–279 (NNKH…QDQP). A compositionally biased stretch (pro residues) spans 134–143 (QHQPPPPPPG). Residues 191-254 (RKRHRTKFTA…NNKHTLGKSP (64 aa)) constitute a DNA-binding region (homeobox; atypical).

In terms of assembly, homo- and heterodimer with other ZFHD proteins. Interacts with MIF1 and MIF2; these interactions prevent nuclear localization and DNA-binding to inhibit transcription regulation activity. Binds to ZHD2, ZHD3, ZHD4, ZHD5, ZHD6, ZHD7, ZHD8, ZHD9, ZHD10 and ZHD11. Mostly expressed in flowers and inflorescence.

The protein resides in the nucleus. Its function is as follows. Putative transcription factor. The polypeptide is Zinc-finger homeodomain protein 1 (ZHD1) (Arabidopsis thaliana (Mouse-ear cress)).